Here is a 209-residue protein sequence, read N- to C-terminus: Ribosomal RNA large subunit methyltransferase E (209 aa).

Positions 63, 65, 83, 99, and 124 each coordinate S-adenosyl-L-methionine. The Proton acceptor role is filled by Lys-164.

It belongs to the class I-like SAM-binding methyltransferase superfamily. RNA methyltransferase RlmE family.

Its subcellular location is the cytoplasm. It carries out the reaction uridine(2552) in 23S rRNA + S-adenosyl-L-methionine = 2'-O-methyluridine(2552) in 23S rRNA + S-adenosyl-L-homocysteine + H(+). Specifically methylates the uridine in position 2552 of 23S rRNA at the 2'-O position of the ribose in the fully assembled 50S ribosomal subunit. This Pseudoalteromonas translucida (strain TAC 125) protein is Ribosomal RNA large subunit methyltransferase E.